We begin with the raw amino-acid sequence, 137 residues long: 6,7-dimethyl-8-ribityllumazine synthase (137 aa).

Residues F11, 43–45 (SFD), and 67–69 (CVI) contribute to the 5-amino-6-(D-ribitylamino)uracil site. 72-73 (DT) provides a ligand contact to (2S)-2-hydroxy-3-oxobutyl phosphate. The active-site Proton donor is H75. L100 contributes to the 5-amino-6-(D-ribitylamino)uracil binding site. (2S)-2-hydroxy-3-oxobutyl phosphate is bound at residue R115.

It belongs to the DMRL synthase family. In terms of assembly, forms an icosahedral capsid composed of 60 subunits, arranged as a dodecamer of pentamers.

The enzyme catalyses (2S)-2-hydroxy-3-oxobutyl phosphate + 5-amino-6-(D-ribitylamino)uracil = 6,7-dimethyl-8-(1-D-ribityl)lumazine + phosphate + 2 H2O + H(+). It functions in the pathway cofactor biosynthesis; riboflavin biosynthesis; riboflavin from 2-hydroxy-3-oxobutyl phosphate and 5-amino-6-(D-ribitylamino)uracil: step 1/2. Catalyzes the formation of 6,7-dimethyl-8-ribityllumazine by condensation of 5-amino-6-(D-ribitylamino)uracil with 3,4-dihydroxy-2-butanone 4-phosphate. This is the penultimate step in the biosynthesis of riboflavin. The polypeptide is 6,7-dimethyl-8-ribityllumazine synthase (Methanococcus maripaludis (strain C6 / ATCC BAA-1332)).